Reading from the N-terminus, the 86-residue chain is Photosystem I reaction center subunit PsaK (86 aa).

The next 2 membrane-spanning stretches (helical) occupy residues 15–35 (SWSISTAIIMVICNLLCIGLG) and 57–77 (GLPELLATTSLGHIIGAGAII).

It belongs to the PsaG/PsaK family.

Its subcellular location is the plastid. The protein localises to the chloroplast thylakoid membrane. The sequence is that of Photosystem I reaction center subunit PsaK from Gracilaria tenuistipitata var. liui (Red alga).